The sequence spans 560 residues: Dihydroxy-acid dehydratase (560 aa).

Aspartate 78 serves as a coordination point for Mg(2+). Cysteine 119 provides a ligand contact to [2Fe-2S] cluster. Mg(2+)-binding residues include aspartate 120 and lysine 121. The residue at position 121 (lysine 121) is an N6-carboxylysine. Cysteine 192 provides a ligand contact to [2Fe-2S] cluster. Glutamate 446 serves as a coordination point for Mg(2+). Catalysis depends on serine 472, which acts as the Proton acceptor.

The protein belongs to the IlvD/Edd family. In terms of assembly, homodimer. [2Fe-2S] cluster is required as a cofactor. Requires Mg(2+) as cofactor.

It carries out the reaction (2R)-2,3-dihydroxy-3-methylbutanoate = 3-methyl-2-oxobutanoate + H2O. The catalysed reaction is (2R,3R)-2,3-dihydroxy-3-methylpentanoate = (S)-3-methyl-2-oxopentanoate + H2O. It participates in amino-acid biosynthesis; L-isoleucine biosynthesis; L-isoleucine from 2-oxobutanoate: step 3/4. It functions in the pathway amino-acid biosynthesis; L-valine biosynthesis; L-valine from pyruvate: step 3/4. In terms of biological role, functions in the biosynthesis of branched-chain amino acids. Catalyzes the dehydration of (2R,3R)-2,3-dihydroxy-3-methylpentanoate (2,3-dihydroxy-3-methylvalerate) into 2-oxo-3-methylpentanoate (2-oxo-3-methylvalerate) and of (2R)-2,3-dihydroxy-3-methylbutanoate (2,3-dihydroxyisovalerate) into 2-oxo-3-methylbutanoate (2-oxoisovalerate), the penultimate precursor to L-isoleucine and L-valine, respectively. The sequence is that of Dihydroxy-acid dehydratase from Anaeromyxobacter dehalogenans (strain 2CP-C).